The chain runs to 262 residues: Hemin import ATP-binding protein HmuV (262 aa).

Residues 5-242 (LEARKAGFAT…ELIGAVFDVE (238 aa)) enclose the ABC transporter domain. 37–44 (GPNGAGKS) contacts ATP.

The protein belongs to the ABC transporter superfamily. Heme (hemin) importer (TC 3.A.1.14.5) family. As to quaternary structure, the complex is composed of two ATP-binding proteins (HmuV), two transmembrane proteins (HmuU) and a solute-binding protein (HmuT).

Its subcellular location is the cell inner membrane. In terms of biological role, part of the ABC transporter complex HmuTUV involved in hemin import. Responsible for energy coupling to the transport system. The protein is Hemin import ATP-binding protein HmuV of Rhodopseudomonas palustris (strain HaA2).